Reading from the N-terminus, the 149-residue chain is Transcriptional repressor NrdR (149 aa).

The segment at 3-34 (CPFCGNLETQVVETRVSEDADFIRRRRQCGAC) is a zinc-finger region. The 91-residue stretch at 49–139 (PAIVKKDGRR…VYRSFEDIDE (91 aa)) folds into the ATP-cone domain.

This sequence belongs to the NrdR family. Requires Zn(2+) as cofactor.

In terms of biological role, negatively regulates transcription of bacterial ribonucleotide reductase nrd genes and operons by binding to NrdR-boxes. The protein is Transcriptional repressor NrdR of Polaromonas sp. (strain JS666 / ATCC BAA-500).